Here is an 888-residue protein sequence, read N- to C-terminus: Potassium channel AKT6 (888 aa).

The Cytoplasmic portion of the chain corresponds to 1 to 84 (MEKKKVWFWG…PFDPRYRAWE (84 aa)). The interval 10-31 (GVKDDGEGGGGRGGGRTKDAED) is disordered. The helical transmembrane segment at 85–105 (TFLVFLVLYTAWASPFEFGFL) threads the bilayer. At 106–113 (QKPRPPLS) the chain is on the extracellular side. Residues 114–134 (ILDNIVNGFFAVDIVLTFFVA) traverse the membrane as a helical segment. Residues 135–155 (FLDKVTYLLVDDPKRIAWRYA) are Cytoplasmic-facing. The helical transmembrane segment at 156 to 176 (STWLIFDVVSTFPYEIFGSLL) threads the bilayer. Residues 177–184 (HESIQGYG) lie on the Extracellular side of the membrane. Residues 185 to 205 (IFSMLRLWRLRRVSNCFARLE) form a helical; Voltage-sensor membrane-spanning segment. At 206–219 (KDRKYSYFWVRCSK) the chain is on the cytoplasmic side. The chain crosses the membrane as a helical span at residues 220 to 240 (LLLVTLFVIHCGACFLYSIAA). Residues 241–267 (HYPDPSKTFMALTDENWKESPIAVRYN) are Extracellular-facing. The pore-forming intramembrane region spans 268 to 287 (TAMYWSITTFSTTGYGDIHG). The Extracellular portion of the chain corresponds to 288–291 (VNSR). A helical membrane pass occupies residues 292-312 (EMTFILFYMVFNLGLSAYIIG). Over 313-888 (NMTNLVVHVT…GDFLLLSRDP (576 aa)) the chain is Cytoplasmic. 398–519 (LFHGISNDLL…IMNNLLQHLK (122 aa)) is a binding site for a nucleoside 3',5'-cyclic phosphate. ANK repeat units follow at residues 543–572 (DLPL…SPNE), 576–605 (DGRT…DPNI), 609–638 (EGNV…KLSL), 640–669 (SVSY…DVTL), and 673–702 (NGTT…DLDW). Positions 822–888 (RVTISSPENG…GDFLLLSRDP (67 aa)) constitute a KHA domain.

It belongs to the potassium channel family. Plant (TC 1.A.1.4) subfamily. The potassium channel is probably composed of a homo- or heterotetrameric complex of pore-forming subunits. As to expression, predominantly expressed in flowers; especially in pollen.

Its subcellular location is the membrane. In terms of biological role, highly selective inward-rectifying potassium channel that could mediate potassium uptake in the pollen membrane. Plays an important role in pollen tube development. Assuming opened or closed conformations in response to the voltage difference across the membrane, the channel is activated by hyperpolarization. May interact with the cytoskeleton or with regulatory proteins. This is Potassium channel AKT6 (AKT6) from Arabidopsis thaliana (Mouse-ear cress).